The sequence spans 355 residues: Ubiquinone biosynthesis protein COQ4 homolog, mitochondrial (355 aa).

4 residues coordinate Zn(2+): His-134, Asp-135, His-138, and Glu-150.

It belongs to the COQ4 family. In terms of assembly, component of a multi-subunit COQ enzyme complex. It depends on Zn(2+) as a cofactor.

It localises to the mitochondrion inner membrane. It carries out the reaction a 4-hydroxy-3-methoxy-5-(all-trans-polyprenyl)benzoate + H(+) = a 2-methoxy-6-(all-trans-polyprenyl)phenol + CO2. It functions in the pathway cofactor biosynthesis; ubiquinone biosynthesis. Functionally, lyase that catalyzes the C1-decarboxylation of 4-hydroxy-3-methoxy-5-(all-trans-polyprenyl)benzoic acid into 2-methoxy-6-(all-trans-polyprenyl)phenol during ubiquinone biosynthesis. This chain is Ubiquinone biosynthesis protein COQ4 homolog, mitochondrial, found in Plasmodium falciparum (isolate 3D7).